Consider the following 644-residue polypeptide: Exoribonuclease 2 (644 aa).

Residues 189-516 enclose the RNB domain; the sequence is REDLTALNFV…NHRLLKAIIA (328 aa). An S1 motif domain is found at 561 to 643; it reads DERFNAEIID…ETRSVIARPA (83 aa).

This sequence belongs to the RNR ribonuclease family. RNase II subfamily.

The protein localises to the cytoplasm. The catalysed reaction is Exonucleolytic cleavage in the 3'- to 5'-direction to yield nucleoside 5'-phosphates.. Its function is as follows. Involved in mRNA degradation. Hydrolyzes single-stranded polyribonucleotides processively in the 3' to 5' direction. This is Exoribonuclease 2 from Serratia proteamaculans (strain 568).